Here is a 310-residue protein sequence, read N- to C-terminus: MSFSDYISRIKDNIRNSIKGKAIIAVSGGQDSSLLSLLASEVLGNNLLCVFIDTGLLRKNETGRVKDFFEKHSMNYVIVDAADTFINNLKGVTDPEEKRKIIGKTFIDVLSEQAQNFGAEYLLQGTIAPDWIESGGQKRDTIKSHHNVGGLPKDMKLKLVEPLRDYYKDEIRGMSKELGLPTDIQPFPGPGLAVRIIGEVTKEKLDLLRAVTDIVERKISEAMPSESRPWQYFAVLLPVRTTGVHGDRRAYGLTVGIRMIETTDAMTGTFSKPSWDLLEDISNTITDEIPEINRVVYDITNKPPATIEWE.

The 187-residue stretch at 1 to 187 folds into the GMPS ATP-PPase domain; that stretch reads MSFSDYISRI…LGLPTDIQPF (187 aa). 27–33 serves as a coordination point for ATP; the sequence is SGGQDSS.

Heterodimer composed of a glutamine amidotransferase subunit (A) and a GMP-binding subunit (B).

The enzyme catalyses XMP + L-glutamine + ATP + H2O = GMP + L-glutamate + AMP + diphosphate + 2 H(+). The protein operates within purine metabolism; GMP biosynthesis; GMP from XMP (L-Gln route): step 1/1. Its function is as follows. Catalyzes the synthesis of GMP from XMP. This is GMP synthase [glutamine-hydrolyzing] subunit B (guaAB) from Thermoplasma volcanium (strain ATCC 51530 / DSM 4299 / JCM 9571 / NBRC 15438 / GSS1).